A 725-amino-acid chain; its full sequence is Fatty acid oxidation complex subunit alpha (725 aa).

The interval 1–189 is enoyl-CoA hydratase/isomerase; the sequence is MIYQGENLSV…ALGMIDGVVS (189 aa). Residue aspartate 296 coordinates substrate. The segment at 311 to 725 is 3-hydroxyacyl-CoA dehydrogenase; sequence EPVTSAAVLG…APQSLSAPSA (415 aa). NAD(+) is bound by residues methionine 324, aspartate 343, 400 to 402, lysine 407, and serine 429; that span reads VVE. Histidine 450 acts as the For 3-hydroxyacyl-CoA dehydrogenase activity in catalysis. Residue asparagine 453 participates in NAD(+) binding. Asparagine 500 and tyrosine 660 together coordinate substrate.

The protein in the N-terminal section; belongs to the enoyl-CoA hydratase/isomerase family. In the C-terminal section; belongs to the 3-hydroxyacyl-CoA dehydrogenase family. Heterotetramer of two alpha chains (FadB) and two beta chains (FadA).

The catalysed reaction is a (3S)-3-hydroxyacyl-CoA + NAD(+) = a 3-oxoacyl-CoA + NADH + H(+). It carries out the reaction a (3S)-3-hydroxyacyl-CoA = a (2E)-enoyl-CoA + H2O. The enzyme catalyses a 4-saturated-(3S)-3-hydroxyacyl-CoA = a (3E)-enoyl-CoA + H2O. It catalyses the reaction (3S)-3-hydroxybutanoyl-CoA = (3R)-3-hydroxybutanoyl-CoA. The catalysed reaction is a (3Z)-enoyl-CoA = a 4-saturated (2E)-enoyl-CoA. It carries out the reaction a (3E)-enoyl-CoA = a 4-saturated (2E)-enoyl-CoA. Its pathway is lipid metabolism; fatty acid beta-oxidation. In terms of biological role, involved in the aerobic and anaerobic degradation of long-chain fatty acids via beta-oxidation cycle. Catalyzes the formation of 3-oxoacyl-CoA from enoyl-CoA via L-3-hydroxyacyl-CoA. It can also use D-3-hydroxyacyl-CoA and cis-3-enoyl-CoA as substrate. The protein is Fatty acid oxidation complex subunit alpha of Aliivibrio fischeri (strain MJ11) (Vibrio fischeri).